The sequence spans 243 residues: Orotidine 5'-phosphate decarboxylase (243 aa).

Residues D18, K39, 66-75, T130, R192, Q201, G221, and R222 each bind substrate; that span reads DLKFHDIPAT. The active-site Proton donor is the K68.

This sequence belongs to the OMP decarboxylase family. Type 1 subfamily. Homodimer.

The enzyme catalyses orotidine 5'-phosphate + H(+) = UMP + CO2. It participates in pyrimidine metabolism; UMP biosynthesis via de novo pathway; UMP from orotate: step 2/2. In terms of biological role, catalyzes the decarboxylation of orotidine 5'-monophosphate (OMP) to uridine 5'-monophosphate (UMP). In Synechococcus sp. (strain WH7803), this protein is Orotidine 5'-phosphate decarboxylase.